Consider the following 280-residue polypeptide: 2,3,4,5-tetrahydropyridine-2,6-dicarboxylate N-succinyltransferase (280 aa).

Residues Arg107 and Asp144 each coordinate substrate.

Belongs to the transferase hexapeptide repeat family. In terms of assembly, homotrimer.

The protein resides in the cytoplasm. It carries out the reaction (S)-2,3,4,5-tetrahydrodipicolinate + succinyl-CoA + H2O = (S)-2-succinylamino-6-oxoheptanedioate + CoA. The protein operates within amino-acid biosynthesis; L-lysine biosynthesis via DAP pathway; LL-2,6-diaminopimelate from (S)-tetrahydrodipicolinate (succinylase route): step 1/3. This is 2,3,4,5-tetrahydropyridine-2,6-dicarboxylate N-succinyltransferase from Granulibacter bethesdensis (strain ATCC BAA-1260 / CGDNIH1).